Reading from the N-terminus, the 31-residue chain is Cytochrome b6-f complex subunit 6 (31 aa).

The chain crosses the membrane as a helical span at residues 3-23; sequence IITSYFGFLLTALTIASALFI.

It belongs to the PetL family. In terms of assembly, the 4 large subunits of the cytochrome b6-f complex are cytochrome b6, subunit IV (17 kDa polypeptide, PetD), cytochrome f and the Rieske protein, while the 4 small subunits are PetG, PetL, PetM and PetN. The complex functions as a dimer.

The protein localises to the plastid. Its subcellular location is the chloroplast thylakoid membrane. Functionally, component of the cytochrome b6-f complex, which mediates electron transfer between photosystem II (PSII) and photosystem I (PSI), cyclic electron flow around PSI, and state transitions. PetL is important for photoautotrophic growth as well as for electron transfer efficiency and stability of the cytochrome b6-f complex. The polypeptide is Cytochrome b6-f complex subunit 6 (Helianthus annuus (Common sunflower)).